Consider the following 230-residue polypeptide: Orotidine 5'-phosphate decarboxylase (230 aa).

Residues Asp-16, Lys-38, 65-74 (DLKLHDIGNT), Thr-119, Arg-180, Gln-189, Gly-209, and Arg-210 contribute to the substrate site. Lys-67 acts as the Proton donor in catalysis.

Belongs to the OMP decarboxylase family. Type 1 subfamily. In terms of assembly, homodimer.

The catalysed reaction is orotidine 5'-phosphate + H(+) = UMP + CO2. The protein operates within pyrimidine metabolism; UMP biosynthesis via de novo pathway; UMP from orotate: step 2/2. Catalyzes the decarboxylation of orotidine 5'-monophosphate (OMP) to uridine 5'-monophosphate (UMP). The chain is Orotidine 5'-phosphate decarboxylase from Methylobacterium radiotolerans (strain ATCC 27329 / DSM 1819 / JCM 2831 / NBRC 15690 / NCIMB 10815 / 0-1).